Here is a 348-residue protein sequence, read N- to C-terminus: Holliday junction branch migration complex subunit RuvB (348 aa).

The interval 4-184 (ADRLIAASGR…FGIVQRLEFY (181 aa)) is large ATPase domain (RuvB-L). ATP-binding positions include isoleucine 23, arginine 24, glycine 65, lysine 68, threonine 69, threonine 70, 131 to 133 (EDF), arginine 174, tyrosine 184, and arginine 221. Residue threonine 69 participates in Mg(2+) binding. Residues 185–255 (SDKDLATIVS…VADLALNLLD (71 aa)) are small ATPAse domain (RuvB-S). The interval 258–348 (ERGFDHSDRR…GADFSEAGDE (91 aa)) is head domain (RuvB-H). DNA is bound by residues arginine 294, arginine 313, and arginine 318.

It belongs to the RuvB family. In terms of assembly, homohexamer. Forms an RuvA(8)-RuvB(12)-Holliday junction (HJ) complex. HJ DNA is sandwiched between 2 RuvA tetramers; dsDNA enters through RuvA and exits via RuvB. An RuvB hexamer assembles on each DNA strand where it exits the tetramer. Each RuvB hexamer is contacted by two RuvA subunits (via domain III) on 2 adjacent RuvB subunits; this complex drives branch migration. In the full resolvosome a probable DNA-RuvA(4)-RuvB(12)-RuvC(2) complex forms which resolves the HJ.

It is found in the cytoplasm. It catalyses the reaction ATP + H2O = ADP + phosphate + H(+). In terms of biological role, the RuvA-RuvB-RuvC complex processes Holliday junction (HJ) DNA during genetic recombination and DNA repair, while the RuvA-RuvB complex plays an important role in the rescue of blocked DNA replication forks via replication fork reversal (RFR). RuvA specifically binds to HJ cruciform DNA, conferring on it an open structure. The RuvB hexamer acts as an ATP-dependent pump, pulling dsDNA into and through the RuvAB complex. RuvB forms 2 homohexamers on either side of HJ DNA bound by 1 or 2 RuvA tetramers; 4 subunits per hexamer contact DNA at a time. Coordinated motions by a converter formed by DNA-disengaged RuvB subunits stimulates ATP hydrolysis and nucleotide exchange. Immobilization of the converter enables RuvB to convert the ATP-contained energy into a lever motion, pulling 2 nucleotides of DNA out of the RuvA tetramer per ATP hydrolyzed, thus driving DNA branch migration. The RuvB motors rotate together with the DNA substrate, which together with the progressing nucleotide cycle form the mechanistic basis for DNA recombination by continuous HJ branch migration. Branch migration allows RuvC to scan DNA until it finds its consensus sequence, where it cleaves and resolves cruciform DNA. The chain is Holliday junction branch migration complex subunit RuvB from Pseudomonas putida (strain W619).